Consider the following 171-residue polypeptide: Co-chaperone protein HscB homolog (171 aa).

One can recognise a J domain in the interval 2–74; the sequence is NHFELFGLPP…ISRAEYLLSQ (73 aa).

Belongs to the HscB family. As to quaternary structure, interacts with HscA and stimulates its ATPase activity.

Co-chaperone involved in the maturation of iron-sulfur cluster-containing proteins. Seems to help targeting proteins to be folded toward HscA. This is Co-chaperone protein HscB homolog from Vibrio vulnificus (strain CMCP6).